The following is a 469-amino-acid chain: Alpha-2C adrenergic receptor (469 aa).

The interval Met-1–Ser-29 is disordered. The Extracellular portion of the chain corresponds to Met-1–Val-36. 2 N-linked (GlcNAc...) asparagine glycosylation sites follow: Asn-8 and Asn-20. The chain crosses the membrane as a helical span at residues Ala-37 to Leu-62. Residues Thr-63 to Leu-73 lie on the Cytoplasmic side of the membrane. A helical membrane pass occupies residues Phe-74–Met-99. The Extracellular portion of the chain corresponds to Asn-100–Cys-109. A disulfide bridge links Cys-109 with Cys-187. The chain crosses the membrane as a helical span at residues Val-110 to Leu-132. Topologically, residues Asp-133–Lys-154 are cytoplasmic. A helical transmembrane segment spans residues Gly-155–Leu-175. At Tyr-176–Trp-194 the chain is on the extracellular side. A helical transmembrane segment spans residues Tyr-195–Val-216. Over Arg-217 to Arg-386 the chain is Cytoplasmic. 2 disordered regions span residues Lys-232–Ala-261 and His-279–Ser-353. Positions His-279–Arg-296 are enriched in basic residues. Over residues Leu-301–Ser-310 the composition is skewed to acidic residues. A compositionally biased stretch (low complexity) spans Arg-331–Ser-353. Residues Phe-387–Phe-407 form a helical membrane-spanning segment. Residues Thr-408–Lys-427 lie on the Extracellular side of the membrane. The chain crosses the membrane as a helical span at residues Phe-428–Asn-448. Over Gln-449–Gln-469 the chain is Cytoplasmic.

It belongs to the G-protein coupled receptor 1 family. Adrenergic receptor subfamily. ADRA2C sub-subfamily.

Its subcellular location is the cell membrane. In terms of biological role, alpha-2 adrenergic receptors mediate the catecholamine-induced inhibition of adenylate cyclase through the action of G proteins. In Didelphis virginiana (North American opossum), this protein is Alpha-2C adrenergic receptor (ADRA2C).